We begin with the raw amino-acid sequence, 195 residues long: Probable GTP-binding protein EngB (195 aa).

Residues 24–195 form the EngB-type G domain; that stretch reads ELPEIALAGR…EAWDAILEKL (172 aa). GTP-binding positions include 32-39, 59-63, 77-80, 144-147, and 176-178; these read GRSNVGKS, GKTQL, DVPG, TKAD, and FSS. Residues Ser39 and Thr61 each contribute to the Mg(2+) site.

The protein belongs to the TRAFAC class TrmE-Era-EngA-EngB-Septin-like GTPase superfamily. EngB GTPase family. Requires Mg(2+) as cofactor.

Its function is as follows. Necessary for normal cell division and for the maintenance of normal septation. This is Probable GTP-binding protein EngB from Streptococcus pneumoniae (strain Hungary19A-6).